A 499-amino-acid chain; its full sequence is Na(+)/H(+) antiporter NhaB (499 aa).

A run of 11 helical transmembrane segments spans residues 33-53, 66-86, 89-109, 128-148, 237-257, 305-325, 326-346, 349-369, 393-413, 449-469, and 477-497; these read PVIF…EFIF, PGGL…HTVY, VSGN…IYFM, AILS…LDAL, FIEF…AGLI, AIVA…VGLI, GLTV…HQIG, FEEA…VGVI, MFFI…VATV, ATPN…APLI, and VWMA…MIVI.

It belongs to the NhaB Na(+)/H(+) (TC 2.A.34) antiporter family.

The protein resides in the cell inner membrane. It catalyses the reaction 2 Na(+)(in) + 3 H(+)(out) = 2 Na(+)(out) + 3 H(+)(in). Its function is as follows. Na(+)/H(+) antiporter that extrudes sodium in exchange for external protons. The chain is Na(+)/H(+) antiporter NhaB from Hahella chejuensis (strain KCTC 2396).